We begin with the raw amino-acid sequence, 524 residues long: Chromosomal replication initiator protein DnaA (524 aa).

The tract at residues 1 to 72 (MNDFWQHCSA…DLARDFWNAP (72 aa)) is domain I, interacts with DnaA modulators. A domain II region spans residues 72 to 187 (PIEVQFVLDP…GEADSMYERS (116 aa)). A domain III, AAA+ region region spans residues 188-404 (KLNPVLTFDN…GALRKILAYS (217 aa)). ATP-binding residues include glycine 232, glycine 234, lysine 235, and threonine 236. A domain IV, binds dsDNA region spans residues 405–524 (KFHGREISIE…LHVLEQTLKG (120 aa)).

It belongs to the DnaA family. Oligomerizes as a right-handed, spiral filament on DNA at oriC.

Its subcellular location is the cytoplasm. In terms of biological role, plays an essential role in the initiation and regulation of chromosomal replication. ATP-DnaA binds to the origin of replication (oriC) to initiate formation of the DNA replication initiation complex once per cell cycle. Binds the DnaA box (a 9 base pair repeat at the origin) and separates the double-stranded (ds)DNA. Forms a right-handed helical filament on oriC DNA; dsDNA binds to the exterior of the filament while single-stranded (ss)DNA is stabiized in the filament's interior. The ATP-DnaA-oriC complex binds and stabilizes one strand of the AT-rich DNA unwinding element (DUE), permitting loading of DNA polymerase. After initiation quickly degrades to an ADP-DnaA complex that is not apt for DNA replication. Binds acidic phospholipids. The polypeptide is Chromosomal replication initiator protein DnaA (Burkholderia multivorans (strain ATCC 17616 / 249)).